We begin with the raw amino-acid sequence, 205 residues long: MIGKLKGVVDSYGEDFVILDVHGVGYVVHCSARTLQRLPPVGEAADLAIETHVREDMIRLYGFRSDAEREWFRLLQTVQGVGTRVALGVLSVLEPADLATAIATGDKGAIARAPGVGPRLAARLVAELKDKAPAFAPVDPALIRLAGAVEERTAPQPVADAISALVNLGYPQIQASAAVAAALQGAGEGAEAKTLIRLGLRELAR.

Residues 1 to 64 (MIGKLKGVVD…EDMIRLYGFR (64 aa)) form a domain I region. Residues 65-143 (SDAEREWFRL…AFAPVDPALI (79 aa)) form a domain II region. The tract at residues 144–152 (RLAGAVEER) is flexible linker. The domain III stretch occupies residues 153 to 205 (TAPQPVADAISALVNLGYPQIQASAAVAAALQGAGEGAEAKTLIRLGLRELAR).

Belongs to the RuvA family. As to quaternary structure, homotetramer. Forms an RuvA(8)-RuvB(12)-Holliday junction (HJ) complex. HJ DNA is sandwiched between 2 RuvA tetramers; dsDNA enters through RuvA and exits via RuvB. An RuvB hexamer assembles on each DNA strand where it exits the tetramer. Each RuvB hexamer is contacted by two RuvA subunits (via domain III) on 2 adjacent RuvB subunits; this complex drives branch migration. In the full resolvosome a probable DNA-RuvA(4)-RuvB(12)-RuvC(2) complex forms which resolves the HJ.

It localises to the cytoplasm. In terms of biological role, the RuvA-RuvB-RuvC complex processes Holliday junction (HJ) DNA during genetic recombination and DNA repair, while the RuvA-RuvB complex plays an important role in the rescue of blocked DNA replication forks via replication fork reversal (RFR). RuvA specifically binds to HJ cruciform DNA, conferring on it an open structure. The RuvB hexamer acts as an ATP-dependent pump, pulling dsDNA into and through the RuvAB complex. HJ branch migration allows RuvC to scan DNA until it finds its consensus sequence, where it cleaves and resolves the cruciform DNA. The protein is Holliday junction branch migration complex subunit RuvA of Methylobacterium nodulans (strain LMG 21967 / CNCM I-2342 / ORS 2060).